An 87-amino-acid polypeptide reads, in one-letter code: Cell division protein FtsL (87 aa).

Residues 1 to 3 (MSR) lie on the Cytoplasmic side of the membrane. A helical membrane pass occupies residues 4-23 (LLLIVLLACSIASAIGVVYM). The Periplasmic portion of the chain corresponds to 24 to 87 (RHMHRKLFVQ…ETSDIVVIRP (64 aa)).

This sequence belongs to the FtsL family. Part of a complex composed of FtsB, FtsL and FtsQ.

Its subcellular location is the cell inner membrane. In terms of biological role, essential cell division protein. May link together the upstream cell division proteins, which are predominantly cytoplasmic, with the downstream cell division proteins, which are predominantly periplasmic. This chain is Cell division protein FtsL, found in Xanthomonas campestris pv. campestris (strain ATCC 33913 / DSM 3586 / NCPPB 528 / LMG 568 / P 25).